The primary structure comprises 576 residues: K(+)/H(+) antiporter NhaP2 (576 aa).

Transmembrane regions (helical) follow at residues 6–26 (INSFFLIGALLTAVSVLLSPM), 34–54 (ILLIFLAVGILAGEDGPGGIL), 58–78 (YSTAYLVSNLALAIILLDGGM), 87–107 (VALWPALSLATFGVAITTSIT), 109–129 (MMAAWLFDLHWLQGLLVGAIV), 163–183 (PMAVFLTVTLIAILANVDTEM), 185–205 (FSFMFISFIKQFGLGICLGLG), 219–239 (LADGLYSILVLSGGLIIYAAS), 242–262 (LGGSGILSIYLVGLFLGNKPT), 271–291 (VLDGMTWVSQIGMFLVLGLLL), 299–319 (ILIPGFALAFGMILFARPVAV), 335–355 (WFISWVGLRGAVPIILAVFPM), and 359–379 (LPGAQLYFNLAFFVVLVSLLV). The RCK C-terminal domain maps to 405–486 (SGVEIYPSSE…LEALSNLFSQ (82 aa)).

Belongs to the monovalent cation:proton antiporter 1 (CPA1) transporter (TC 2.A.36) family. NhaP2 subfamily.

It localises to the cell inner membrane. It catalyses the reaction K(+)(in) + H(+)(out) = K(+)(out) + H(+)(in). In terms of biological role, k(+)/H(+) antiporter that extrudes potassium in exchange for external protons and maintains the internal concentration of potassium under toxic levels. The sequence is that of K(+)/H(+) antiporter NhaP2 from Shewanella baltica (strain OS195).